The primary structure comprises 152 residues: Xanthine-guanine phosphoribosyltransferase (152 aa).

Residues 37–38 (RG), R69, and 88–96 (DDLVDTGGT) each bind 5-phospho-alpha-D-ribose 1-diphosphate. R69 lines the GMP pocket. D89 contacts Mg(2+). Guanine is bound by residues D92 and I135. Xanthine contacts are provided by D92 and I135. GMP contacts are provided by residues 92–96 (DTGGT) and 134–135 (WI).

The protein belongs to the purine/pyrimidine phosphoribosyltransferase family. XGPT subfamily. Homotetramer. The cofactor is Mg(2+).

The protein localises to the cell inner membrane. The catalysed reaction is GMP + diphosphate = guanine + 5-phospho-alpha-D-ribose 1-diphosphate. It carries out the reaction XMP + diphosphate = xanthine + 5-phospho-alpha-D-ribose 1-diphosphate. It catalyses the reaction IMP + diphosphate = hypoxanthine + 5-phospho-alpha-D-ribose 1-diphosphate. It participates in purine metabolism; GMP biosynthesis via salvage pathway; GMP from guanine: step 1/1. It functions in the pathway purine metabolism; XMP biosynthesis via salvage pathway; XMP from xanthine: step 1/1. Purine salvage pathway enzyme that catalyzes the transfer of the ribosyl-5-phosphate group from 5-phospho-alpha-D-ribose 1-diphosphate (PRPP) to the N9 position of the 6-oxopurines guanine and xanthine to form the corresponding ribonucleotides GMP (guanosine 5'-monophosphate) and XMP (xanthosine 5'-monophosphate), with the release of PPi. To a lesser extent, also acts on hypoxanthine. The protein is Xanthine-guanine phosphoribosyltransferase of Shigella boydii serotype 18 (strain CDC 3083-94 / BS512).